Reading from the N-terminus, the 228-residue chain is CMRF-35-like molecule 4 (228 aa).

Residues 1–24 (MIPRVIRLWLPSALFLSQVPGCVP) form the signal peptide. An Ig-like V-type domain is found at 25–126 (LHGPSTITGA…FDGSLGFDKY (102 aa)). The Extracellular portion of the chain corresponds to 25–187 (LHGPSTITGA…QPRSLRSSLY (163 aa)). A disulfide bridge connects residues Cys-43 and Cys-110. N-linked (GlcNAc...) asparagine glycosylation is present at Asn-90. Residues 139–174 (PVTGSSLESGRDILESPTSSVGHTHPSVTTDDTIPA) are disordered. Polar residues predominate over residues 154–170 (SPTSSVGHTHPSVTTDD). A helical transmembrane segment spans residues 188-208 (FWVLVSLKLFLFLSMLGAVLW). The Cytoplasmic segment spans residues 209 to 228 (VNRPQRCSGGSSSRPCYENQ).

Belongs to the CD300 family. In terms of assembly, interacts with TYROBP, HCST and FcR gamma. In terms of tissue distribution, present on the surface of mast cells, dendritic cells, peritoneal macrophages and a subset of B-cells (at protein level).

It is found in the cell membrane. Its function is as follows. Acts as an activating receptor in mast cells and macrophages. The polypeptide is CMRF-35-like molecule 4 (Mus musculus (Mouse)).